Reading from the N-terminus, the 462-residue chain is Cysteine--tRNA ligase (462 aa).

Cysteine 24 is a Zn(2+) binding site. Positions 26 to 36 match the 'HIGH' region motif; sequence PTVYDDAHLGH. Cysteine 199, histidine 224, and glutamate 228 together coordinate Zn(2+). The short motif at 256–260 is the 'KMSKS' region element; sequence KMSKS. Residue lysine 259 coordinates ATP.

The protein belongs to the class-I aminoacyl-tRNA synthetase family. In terms of assembly, monomer. Requires Zn(2+) as cofactor.

It localises to the cytoplasm. It catalyses the reaction tRNA(Cys) + L-cysteine + ATP = L-cysteinyl-tRNA(Cys) + AMP + diphosphate. This Campylobacter jejuni subsp. jejuni serotype O:2 (strain ATCC 700819 / NCTC 11168) protein is Cysteine--tRNA ligase (cysS).